Reading from the N-terminus, the 389-residue chain is Transcription factor MYB97 (389 aa).

HTH myb-type domains are found at residues 16 to 68 (GVVL…ANHL) and 69 to 123 (RPNL…KRFQ). DNA-binding regions (H-T-H motif) lie at residues 44–68 (WNSV…ANHL) and 96–119 (WARM…NTRL). Residues 131–159 (PPEYSQNNHQQQMYPQQPSSPLPSQTPAS) form a disordered region. The span at 140 to 159 (QQQMYPQQPSSPLPSQTPAS) shows a compositional bias: low complexity.

As to expression, accumulates in pollen grains and pollen tube. Mostly expressed in mature pollen grains, and, to a lower extent, in inflorescences and siliques.

Its subcellular location is the nucleus. In terms of biological role, transcription activator. Binds to 5'-CAACTGTC-3' and/or 5'-TAACAAA-3' motif in target gene promoter to promote their expression. Together with MYB101 and MYB120, functions as a male factor that controls pollen tube-synergid interaction in fertilization. Required for pollen tube growth arrest and sperm cell release in the female gametophyte, probably via the regulation of pollen tube-specific gene expression. This Arabidopsis thaliana (Mouse-ear cress) protein is Transcription factor MYB97.